The primary structure comprises 266 residues: Trehalose-6-phosphate phosphatase (266 aa).

The Nucleophile role is filled by Asp-20. Mg(2+) contacts are provided by Asp-20, Asp-22, and Asp-198. 20 to 22 provides a ligand contact to substrate; that stretch reads DLD.

Belongs to the trehalose phosphatase family. Mg(2+) serves as cofactor. The cofactor is Mn(2+). Co(2+) is required as a cofactor. It depends on Zn(2+) as a cofactor.

The enzyme catalyses alpha,alpha-trehalose 6-phosphate + H2O = alpha,alpha-trehalose + phosphate. It participates in glycan biosynthesis; trehalose biosynthesis. In terms of biological role, removes the phosphate from trehalose 6-phosphate (Tre6P) to produce free trehalose. Also catalyzes the dephosphorylation of glucose-6-phosphate (Glu6P) and 2-deoxyglucose-6-phosphate (2dGlu6P). In Escherichia coli (strain K12), this protein is Trehalose-6-phosphate phosphatase (otsB).